We begin with the raw amino-acid sequence, 363 residues long: Dihydroorotate dehydrogenase (quinone) (363 aa).

Residues 62-66 (AGFDK) and Thr86 contribute to the FMN site. Residue Lys66 coordinates substrate. Residue 111–115 (NRMGF) coordinates substrate. FMN-binding residues include Asn142 and Asn175. Substrate is bound at residue Asn175. Ser178 serves as the catalytic Nucleophile. Asn180 is a binding site for substrate. FMN is bound by residues Lys216 and Thr244. Substrate is bound at residue 245–246 (NT). FMN is bound by residues Gly267, Gly296, and 317–318 (YT).

It belongs to the dihydroorotate dehydrogenase family. Type 2 subfamily. As to quaternary structure, monomer. FMN serves as cofactor.

The protein resides in the cell membrane. It carries out the reaction (S)-dihydroorotate + a quinone = orotate + a quinol. Its pathway is pyrimidine metabolism; UMP biosynthesis via de novo pathway; orotate from (S)-dihydroorotate (quinone route): step 1/1. Functionally, catalyzes the conversion of dihydroorotate to orotate with quinone as electron acceptor. In Anaeromyxobacter sp. (strain Fw109-5), this protein is Dihydroorotate dehydrogenase (quinone).